We begin with the raw amino-acid sequence, 427 residues long: Inward rectifier potassium channel 2 (427 aa).

The Cytoplasmic segment spans residues 1-81 (MGSVRTNRYS…IFTTCVDIRW (81 aa)). Position 76 is an S-nitrosocysteine (Cys76). The helical transmembrane segment at 82–106 (RWMLVIFCLAFVLSWLFFGCVFWLI) threads the bilayer. Over 107 to 128 (ALLHGDLDASKESKACVSEVNS) the chain is Extracellular. The segment at residues 129 to 140 (FTAAFLFSIETQ) is an intramembrane region (helical; Pore-forming). The pore-forming intramembrane region spans 141–147 (TTIGYGF). Positions 142 to 147 (TIGYGF) match the Selectivity filter motif. Topologically, residues 148–156 (RCVTDECPV) are extracellular. A helical transmembrane segment spans residues 157 to 178 (AVFMVVFQSIVGCIIDAFIIGA). The Cytoplasmic segment spans residues 179-427 (VMAKMAKPKK…PRPLRRESEI (249 aa)). The interval 181 to 208 (AKMAKPKKRNETLVFSHNAVIAMRDGKL) is polyphosphoinositide (PIP2)-binding. Residues 384–427 (SKEEDDSENGVPESTSTDTPPDIDLHNQASVPLEPRPLRRESEI) form a disordered region. The short motif at 425–427 (SEI) is the PDZ-binding element.

The protein belongs to the inward rectifier-type potassium channel (TC 1.A.2.1) family. KCNJ2 subfamily. In terms of assembly, homotetramer. Homomultimeric and heteromultimeric association with KCNJ4/Kir2.3. Can form heteromeric channels with Kir2.6/KCNJ18. Associates, via its PDZ-recognition domain, with a complex containing LIN7A, LIN7B, LIN7C, DLG1, CASK and APBA1. Post-translationally, S-nitrosylation increases the open probability and inward rectifying currents.

Its subcellular location is the cell membrane. It is found in the sarcolemma. The protein localises to the T-tubule. The enzyme catalyses K(+)(in) = K(+)(out). Its activity is regulated as follows. Activated by phosphatidylinositol 4,5 biphosphate (PtdIns(4,5)P2). Its function is as follows. Inward rectifier potassium channels are characterized by a greater tendency to allow potassium to flow into the cell rather than out of it. Their voltage dependence is regulated by the concentration of extracellular potassium; as external potassium is raised, the voltage range of the channel opening shifts to more positive voltages. The inward rectification is mainly due to the blockage of outward current by internal magnesium. Can be blocked by extracellular barium and cesium. Probably participates in establishing action potential waveform and excitability of neuronal and muscle tissues. The polypeptide is Inward rectifier potassium channel 2 (KCNJ2) (Bos taurus (Bovine)).